A 724-amino-acid chain; its full sequence is Catalase-peroxidase (724 aa).

The segment at residues 98–226 is a cross-link (tryptophyl-tyrosyl-methioninium (Trp-Tyr) (with M-252)); that stretch reads WHSAGSYRIA…LAAVMMGLIY (129 aa). Residue histidine 99 is the Proton acceptor of the active site. A cross-link (tryptophyl-tyrosyl-methioninium (Tyr-Met) (with W-98)) is located at residues 226–252; it reads YVNPEGVDGHPDPQKTANDVRVTFARM. Heme b is bound at residue histidine 267.

The protein belongs to the peroxidase family. Peroxidase/catalase subfamily. In terms of assembly, homodimer or homotetramer. Requires heme b as cofactor. Post-translationally, formation of the three residue Trp-Tyr-Met cross-link is important for the catalase, but not the peroxidase activity of the enzyme.

It catalyses the reaction H2O2 + AH2 = A + 2 H2O. It carries out the reaction 2 H2O2 = O2 + 2 H2O. Functionally, bifunctional enzyme with both catalase and broad-spectrum peroxidase activity. The sequence is that of Catalase-peroxidase from Edwardsiella tarda.